The chain runs to 345 residues: Succinylglutamate desuccinylase (345 aa).

Zn(2+) is bound by residues histidine 63, glutamate 66, and histidine 160. Glutamate 224 is a catalytic residue.

This sequence belongs to the AspA/AstE family. Succinylglutamate desuccinylase subfamily. It depends on Zn(2+) as a cofactor.

The enzyme catalyses N-succinyl-L-glutamate + H2O = L-glutamate + succinate. Its pathway is amino-acid degradation; L-arginine degradation via AST pathway; L-glutamate and succinate from L-arginine: step 5/5. In terms of biological role, transforms N(2)-succinylglutamate into succinate and glutamate. This chain is Succinylglutamate desuccinylase, found in Shewanella woodyi (strain ATCC 51908 / MS32).